We begin with the raw amino-acid sequence, 106 residues long: Thiosulfate sulfurtransferase GlpE (106 aa).

The Rhodanese domain maps to 17 to 105 (QLPSVCLADI…WRHVYPYTAT (89 aa)). Cysteine 65 functions as the Cysteine persulfide intermediate in the catalytic mechanism.

Belongs to the GlpE family.

The protein resides in the cytoplasm. It carries out the reaction thiosulfate + hydrogen cyanide = thiocyanate + sulfite + 2 H(+). The catalysed reaction is thiosulfate + [thioredoxin]-dithiol = [thioredoxin]-disulfide + hydrogen sulfide + sulfite + 2 H(+). Transferase that catalyzes the transfer of sulfur from thiosulfate to thiophilic acceptors such as cyanide or dithiols. May function in a CysM-independent thiosulfate assimilation pathway by catalyzing the conversion of thiosulfate to sulfite, which can then be used for L-cysteine biosynthesis. This Tolumonas auensis (strain DSM 9187 / NBRC 110442 / TA 4) protein is Thiosulfate sulfurtransferase GlpE.